The following is a 185-amino-acid chain: Regulator of rDNA transcription protein 13 (185 aa).

WD repeat units lie at residues 9–48, 71–108, and 111–148; these read GHTD…NNGE, GHRA…LKHF, and HTQL…LVRS.

Functionally, may be involved in the modulation of rDNA transcription. This chain is Regulator of rDNA transcription protein 13 (RRT13), found in Saccharomyces cerevisiae (strain ATCC 204508 / S288c) (Baker's yeast).